The sequence spans 132 residues: Transcription antitermination protein NusB (132 aa).

This sequence belongs to the NusB family.

Involved in transcription antitermination. Required for transcription of ribosomal RNA (rRNA) genes. Binds specifically to the boxA antiterminator sequence of the ribosomal RNA (rrn) operons. The protein is Transcription antitermination protein NusB of Campylobacter lari (strain RM2100 / D67 / ATCC BAA-1060).